Reading from the N-terminus, the 363-residue chain is G-protein coupled receptor 6 (363 aa).

Over 1 to 75 (MNASAAALNE…SGLLLSAVNP (75 aa)) the chain is Extracellular. N-linked (GlcNAc...) asparagine glycosylation is found at N2 and N9. Positions 28–51 (AGTPDTSEWGPPAASAALGGGGGP) are disordered. N-linked (GlcNAc...) asparagine glycosylation occurs at N52. A helical transmembrane segment spans residues 76–95 (WDVLLCVSGTVIAGENALVV). Topologically, residues 96–107 (ALIASTPALRTP) are cytoplasmic. A helical membrane pass occupies residues 108–131 (MFVLVGSLATADLLAGCGLILHFV). Topologically, residues 132–143 (FQYVVPSETVSL) are extracellular. Residues 144 to 165 (LMVGFLVASFAASVSSLLAITV) traverse the membrane as a helical segment. The Cytoplasmic segment spans residues 166 to 186 (DRYLSLYNALTYYSRRTLLGV). The helical transmembrane segment at 187–206 (HLLLAATWTVSLGLGLLPVL) threads the bilayer. At 207-231 (GWNCLADRASCSVVRPLTRSHVALL) the chain is on the extracellular side. Residues 232–250 (STSFFVVFGIMLHLYVRIC) form a helical membrane-spanning segment. Topologically, residues 251–278 (QVVWRHAHQIALQQHCLAPPHLAATRKG) are cytoplasmic. The chain crosses the membrane as a helical span at residues 279–305 (VGTLAVVLGTFGASWLPFAIYCVVGSQ). At 306 to 310 (EDPAI) the chain is on the extracellular side. Residues 311-332 (YTYATLLPATYNSMINPIIYAF) form a helical membrane-spanning segment. Residues 333-363 (RNQEIQRALWLLFCGCFQSKVPFRSRSPSEV) are Cytoplasmic-facing. C346 carries the S-palmitoyl cysteine lipid modification. S357, S359, and S361 each carry phosphoserine.

The protein belongs to the G-protein coupled receptor 1 family. Expressed in the brain, with a prominent distribution in striatum.

Its subcellular location is the cell membrane. Functionally, orphan receptor with constitutive G(s) signaling activity that activate cyclic AMP. Promotes neurite outgrowth and blocks myelin inhibition in neurons. This chain is G-protein coupled receptor 6 (Gpr6), found in Rattus norvegicus (Rat).